Consider the following 399-residue polypeptide: Succinate--CoA ligase [ADP-forming] subunit beta (399 aa).

Residues 9–254 form the ATP-grasp domain; the sequence is KAVLAEFGAP…ESEEDPKEIE (246 aa). Residues lysine 46, 53 to 55, glutamate 109, alanine 112, and glutamate 117 each bind ATP; that span reads GRG. 2 residues coordinate Mg(2+): asparagine 209 and aspartate 223. Residues asparagine 274 and 331 to 333 contribute to the substrate site; that span reads GIM.

This sequence belongs to the succinate/malate CoA ligase beta subunit family. In terms of assembly, heterotetramer of two alpha and two beta subunits. Mg(2+) is required as a cofactor.

The enzyme catalyses succinate + ATP + CoA = succinyl-CoA + ADP + phosphate. It carries out the reaction GTP + succinate + CoA = succinyl-CoA + GDP + phosphate. It functions in the pathway carbohydrate metabolism; tricarboxylic acid cycle; succinate from succinyl-CoA (ligase route): step 1/1. Functionally, succinyl-CoA synthetase functions in the citric acid cycle (TCA), coupling the hydrolysis of succinyl-CoA to the synthesis of either ATP or GTP and thus represents the only step of substrate-level phosphorylation in the TCA. The beta subunit provides nucleotide specificity of the enzyme and binds the substrate succinate, while the binding sites for coenzyme A and phosphate are found in the alpha subunit. This chain is Succinate--CoA ligase [ADP-forming] subunit beta, found in Caulobacter sp. (strain K31).